The sequence spans 636 residues: Polyglycine hydrolase (636 aa).

A signal peptide spans 1 to 22 (MHSLSLRRLLTSVLSLCSCSSA). Residues Asn-30 and Asn-151 are each glycosylated (N-linked (GlcNAc...) asparagine). A disulfide bridge connects residues Cys-141 and Cys-175. Ser-363 is an active-site residue. 2 N-linked (GlcNAc...) asparagine glycosylation sites follow: Asn-383 and Asn-481. The disordered stretch occupies residues 512–540 (TEDRIVQESKNTGQDPVHPQSAKLVPGPH).

This sequence belongs to the peptidase S12 family.

It is found in the secreted. The catalysed reaction is a glycyl-glycyl-[protein] + H2O = N-terminal glycyl-[protein] + [protein]-C-terminal glycine. In terms of biological role, serine-type endopeptidase that cleaves Gly-Gly bonds in the polyglycine linker of host plant class IV chitinases to disrupt their chitin-binding, and thereby plays a role in lowering the defense responses of the host to the fungus. Degrades Z.mays Endochitinase A (CHIA) in vitro, although corn is not its host species. The sequence is that of Polyglycine hydrolase from Fusarium vanettenii (strain ATCC MYA-4622 / CBS 123669 / FGSC 9596 / NRRL 45880 / 77-13-4) (Fusarium solani subsp. pisi).